A 529-amino-acid chain; its full sequence is MKEAKFIFVTGGVVSSLGKGLVASSVGALLQAHGFKIRIRKLDPYLNIDPGTMNPTQHGEVFVTEDGAETDLDLGHYERFTGIKATKDDNITTGKIYHELLKKERRGDYLGKTVQVIPHVTDLIKSFIFNGTEGLDFVICEIGGTVGDIESQPFLEAIRQVNYTLGKQRVILIHLTLIPYLAAAQELKTKPTQHSVRELNSAGLQPDIILCRSEKEIFDNQREKIAKLCNVSLSNVIPAPDVSHIYELPVLYSQCGLDTQILEHFHLSKPKPSLTEWDQIVHSIRHPTQEVTVSIVGKYTEFPDAYKSLVEALNHGAISNKVKVKINWVNSREKEEKPIGEKLQNSHAILVPGGFGDDGVEGKILAINYARTNNIPFFGICLGMQLAIIEFARNVVKLEDAHSEEFRNCKHPIVKLAGDQDDDLGGTMRLGAYKCNINANSKMMDAYSNTTISERHRHRYIINSDYKDDLEKNGLLCSGISEDGTCIEAVELESHPWFIGVQFHPEFQSKPFSPHPLFVSFVKAAIDKK.

Residues 1 to 267 are amidoligase domain; sequence MKEAKFIFVT…DTQILEHFHL (267 aa). Ser-15 serves as a coordination point for CTP. Residue Ser-15 coordinates UTP. ATP is bound by residues 16-21 and Asp-73; that span reads SLGKGL. Residues Asp-73 and Glu-141 each contribute to the Mg(2+) site. Residues 148–150, 188–193, and Lys-224 contribute to the CTP site; these read DIE and KTKPTQ. Residues 188–193 and Lys-224 contribute to the UTP site; that span reads KTKPTQ. The 238-residue stretch at 292–529 folds into the Glutamine amidotransferase type-1 domain; that stretch reads TVSIVGKYTE…SFVKAAIDKK (238 aa). Residue Gly-354 coordinates L-glutamine. Residue Cys-381 is the Nucleophile; for glutamine hydrolysis of the active site. L-glutamine is bound by residues 382–385, Glu-405, and Arg-459; that span reads LGMQ. Active-site residues include His-504 and Glu-506.

This sequence belongs to the CTP synthase family. As to quaternary structure, homotetramer.

It carries out the reaction UTP + L-glutamine + ATP + H2O = CTP + L-glutamate + ADP + phosphate + 2 H(+). The enzyme catalyses L-glutamine + H2O = L-glutamate + NH4(+). It catalyses the reaction UTP + NH4(+) + ATP = CTP + ADP + phosphate + 2 H(+). It participates in pyrimidine metabolism; CTP biosynthesis via de novo pathway; CTP from UDP: step 2/2. With respect to regulation, allosterically activated by GTP, when glutamine is the substrate; GTP has no effect on the reaction when ammonia is the substrate. The allosteric effector GTP functions by stabilizing the protein conformation that binds the tetrahedral intermediate(s) formed during glutamine hydrolysis. Inhibited by the product CTP, via allosteric rather than competitive inhibition. Functionally, catalyzes the ATP-dependent amination of UTP to CTP with either L-glutamine or ammonia as the source of nitrogen. Regulates intracellular CTP levels through interactions with the four ribonucleotide triphosphates. The polypeptide is CTP synthase (Wolbachia pipientis wMel).